Reading from the N-terminus, the 62-residue chain is MARYRHSRSRXRSRYRRRRRXRSRYRSXRRRYRGRRRRRSRRGRRRRGYSRXRYSRRRRRRY.

The disordered stretch occupies residues 1 to 62 (MARYRHSRSR…RYSRRRRRRY (62 aa)).

It belongs to the protamine P1 family. In terms of tissue distribution, testis.

It localises to the nucleus. The protein localises to the chromosome. Protamines substitute for histones in the chromatin of sperm during the haploid phase of spermatogenesis. They compact sperm DNA into a highly condensed, stable and inactive complex. The polypeptide is Sperm protamine P1 (PRM1) (Dendrolagus dorianus (Doria's tree-kangaroo)).